Here is a 387-residue protein sequence, read N- to C-terminus: [LysW]-aminoadipate semialdehyde/glutamate semialdehyde transaminase (387 aa).

Pyridoxal 5'-phosphate-binding positions include glycine 96–threonine 97 and phenylalanine 123. Arginine 126 lines the substrate pocket. Aspartate 207–glutamine 210 lines the pyridoxal 5'-phosphate pocket. Lysine 236 bears the N6-(pyridoxal phosphate)lysine mark. Serine 264 serves as a coordination point for substrate. Residue threonine 265 coordinates pyridoxal 5'-phosphate.

It belongs to the class-III pyridoxal-phosphate-dependent aminotransferase family. LysJ subfamily. As to quaternary structure, homodimer. Requires pyridoxal 5'-phosphate as cofactor.

Its subcellular location is the cytoplasm. It carries out the reaction [amino-group carrier protein]-C-terminal-gamma-(L-lysyl)-L-glutamate + 2-oxoglutarate = [amino-group carrier protein]-C-terminal-N-(1-carboxy-5-oxopentan-1-yl)-L-glutamine + L-glutamate. It catalyses the reaction [amino-group carrier protein]-C-terminal-gamma-(L-ornithyl)-L-glutamate + 2-oxoglutarate = [amino-group carrier protein]-C-terminal-gamma-(L-glutamyl-5-semialdehyde)-L-glutamate + L-glutamate. The protein operates within amino-acid biosynthesis; L-lysine biosynthesis via AAA pathway; L-lysine from L-alpha-aminoadipate (Thermus route): step 4/5. It participates in amino-acid biosynthesis; L-arginine biosynthesis. Involved in both the arginine and lysine biosynthetic pathways. The protein is [LysW]-aminoadipate semialdehyde/glutamate semialdehyde transaminase of Sulfurisphaera tokodaii (strain DSM 16993 / JCM 10545 / NBRC 100140 / 7) (Sulfolobus tokodaii).